We begin with the raw amino-acid sequence, 236 residues long: Glucosamine-6-phosphate deaminase (236 aa).

Asp-62 (proton acceptor; for enolization step) is an active-site residue. The For ring-opening step role is filled by Asn-128. The active-site Proton acceptor; for ring-opening step is the His-130. Residue Glu-135 is the For ring-opening step of the active site.

The protein belongs to the glucosamine/galactosamine-6-phosphate isomerase family. NagB subfamily.

It catalyses the reaction alpha-D-glucosamine 6-phosphate + H2O = beta-D-fructose 6-phosphate + NH4(+). The protein operates within amino-sugar metabolism; N-acetylneuraminate degradation; D-fructose 6-phosphate from N-acetylneuraminate: step 5/5. In terms of biological role, catalyzes the reversible isomerization-deamination of glucosamine 6-phosphate (GlcN6P) to form fructose 6-phosphate (Fru6P) and ammonium ion. In Lacticaseibacillus paracasei (strain ATCC 334 / BCRC 17002 / CCUG 31169 / CIP 107868 / KCTC 3260 / NRRL B-441) (Lactobacillus paracasei), this protein is Glucosamine-6-phosphate deaminase.